Reading from the N-terminus, the 116-residue chain is Host cell factor C1 regulator 1 (116 aa).

A disordered region spans residues 1–22; that stretch reads MILQQPLERGPPGRDPRATTGV. Residues 54-57 form an interaction with HCFC1 region; it reads DHPY. Residues 88–97 carry the Nuclear export signal motif; it reads IPEALRLLRL.

In terms of assembly, interacts with HCFC1.

It is found in the cytoplasm. It localises to the nucleus. Regulates HCFC1 activity by modulating its subcellular localization. Overexpression of HCFC1R1 leads to accumulation of HCFC1 in the cytoplasm. HCFC1R1-mediated export may provide the pool of cytoplasmic HCFC1 required for import of virion-derived VP16 into the nucleus. This is Host cell factor C1 regulator 1 (Hcfc1r1) from Rattus norvegicus (Rat).